We begin with the raw amino-acid sequence, 269 residues long: NAD kinase (269 aa).

Asp-62 (proton acceptor) is an active-site residue. NAD(+) is bound by residues 62 to 63, 130 to 131, Lys-141, Arg-158, Asp-160, 171 to 176, Ala-195, and Gln-229; these read DG, NE, and TAYAMS.

Belongs to the NAD kinase family. It depends on a divalent metal cation as a cofactor.

It localises to the cytoplasm. The catalysed reaction is NAD(+) + ATP = ADP + NADP(+) + H(+). Its function is as follows. Involved in the regulation of the intracellular balance of NAD and NADP, and is a key enzyme in the biosynthesis of NADP. Catalyzes specifically the phosphorylation on 2'-hydroxyl of the adenosine moiety of NAD to yield NADP. This is NAD kinase from Methanospirillum hungatei JF-1 (strain ATCC 27890 / DSM 864 / NBRC 100397 / JF-1).